Here is a 365-residue protein sequence, read N- to C-terminus: Carbamoyl phosphate synthase small chain (365 aa).

CPSase stretches follow at residues M1–G166 and M1–H169. The L-glutamine site is built by S45, G218, and G220. A Glutamine amidotransferase type-1 domain is found at R170–E357. C245 (nucleophile) is an active-site residue. Residues L246, Q249, N287, G289, and Y290 each coordinate L-glutamine. Residues H330 and E332 contribute to the active site.

This sequence belongs to the CarA family. Composed of two chains; the small (or glutamine) chain promotes the hydrolysis of glutamine to ammonia, which is used by the large (or ammonia) chain to synthesize carbamoyl phosphate. Tetramer of heterodimers (alpha,beta)4.

It carries out the reaction hydrogencarbonate + L-glutamine + 2 ATP + H2O = carbamoyl phosphate + L-glutamate + 2 ADP + phosphate + 2 H(+). It catalyses the reaction L-glutamine + H2O = L-glutamate + NH4(+). It participates in amino-acid biosynthesis; L-arginine biosynthesis; carbamoyl phosphate from bicarbonate: step 1/1. The protein operates within pyrimidine metabolism; UMP biosynthesis via de novo pathway; (S)-dihydroorotate from bicarbonate: step 1/3. Functionally, small subunit of the glutamine-dependent carbamoyl phosphate synthetase (CPSase). CPSase catalyzes the formation of carbamoyl phosphate from the ammonia moiety of glutamine, carbonate, and phosphate donated by ATP, constituting the first step of 2 biosynthetic pathways, one leading to arginine and/or urea and the other to pyrimidine nucleotides. The small subunit (glutamine amidotransferase) binds and cleaves glutamine to supply the large subunit with the substrate ammonia. The chain is Carbamoyl phosphate synthase small chain from Bacillus anthracis.